The following is a 416-amino-acid chain: Probable mannose-6-phosphate isomerase (416 aa).

Positions 99, 101, 126, and 259 each coordinate Zn(2+). Arginine 278 is a catalytic residue.

This sequence belongs to the mannose-6-phosphate isomerase type 1 family. Requires Zn(2+) as cofactor.

It localises to the cytoplasm. The enzyme catalyses D-mannose 6-phosphate = D-fructose 6-phosphate. It participates in nucleotide-sugar biosynthesis; GDP-alpha-D-mannose biosynthesis; alpha-D-mannose 1-phosphate from D-fructose 6-phosphate: step 1/2. Functionally, involved in the synthesis of the GDP-mannose and dolichol-phosphate-mannose required for a number of critical mannosyl transfer reactions. The polypeptide is Probable mannose-6-phosphate isomerase (Caenorhabditis elegans).